Reading from the N-terminus, the 337-residue chain is ATP-dependent 6-phosphofructokinase (337 aa).

Glycine 11 serves as a coordination point for ATP. An ADP-binding site is contributed by 21–25; the sequence is RAVVR. ATP contacts are provided by residues 72–73 and 102–105; these read RY and GDGS. Residue aspartate 103 coordinates Mg(2+). 125-127 is a binding site for substrate; it reads TID. The Proton acceptor role is filled by aspartate 127. Arginine 154 provides a ligand contact to ADP. Residues arginine 162 and 169–171 each bind substrate; that span reads MGR. Residues 185-187 and 214-216 each bind ADP; these read GAD and KNH. Substrate-binding positions include glutamate 223, arginine 245, and 251–254; that span reads HILR.

It belongs to the phosphofructokinase type A (PFKA) family. ATP-dependent PFK group I subfamily. Prokaryotic clade 'B1' sub-subfamily. Homotetramer. Requires Mg(2+) as cofactor.

The protein localises to the cytoplasm. It catalyses the reaction beta-D-fructose 6-phosphate + ATP = beta-D-fructose 1,6-bisphosphate + ADP + H(+). It functions in the pathway carbohydrate degradation; glycolysis; D-glyceraldehyde 3-phosphate and glycerone phosphate from D-glucose: step 3/4. Its activity is regulated as follows. Allosterically activated by ADP and other diphosphonucleosides, and allosterically inhibited by phosphoenolpyruvate. Its function is as follows. Catalyzes the phosphorylation of D-fructose 6-phosphate to fructose 1,6-bisphosphate by ATP, the first committing step of glycolysis. The polypeptide is ATP-dependent 6-phosphofructokinase (Streptococcus uberis (strain ATCC BAA-854 / 0140J)).